A 333-amino-acid polypeptide reads, in one-letter code: Procathepsin L (333 aa).

A signal peptide spans 1–17 (MNPTLILAAFCLGIASA). A propeptide spans 18-113 (TLTFDHSLEA…KVFQEPLFYE (96 aa)) (activation peptide). Residue Glu122 coordinates Zn(2+). Intrachain disulfides connect Cys135/Cys178 and Cys169/Cys211. Cys138 is a catalytic residue. Glu163, Asp184, Glu199, Glu205, and Glu209 together coordinate Zn(2+). Asn221 carries an N-linked (GlcNAc...) asparagine glycan. Zn(2+) contacts are provided by Asp227, Asp250, His253, Asp273, and Asp275. A disulfide bridge connects residues Cys269 and Cys322. His276 is an active-site residue. A propeptide spanning residues 289–291 (ESD) is cleaved from the precursor. The active site involves Asn300.

The protein belongs to the peptidase C1 family. As to quaternary structure, dimer of a heavy and a light chain linked by disulfide bonds. Interacts with Long isoform of CD74/Ii chain; the interaction stabilizes the conformation of mature CTSL. In terms of processing, during export along the endocytic pathway, pro-CTSL undergoes several proteolytic cleavages to generate the CTSL single-chain and two-chain mature forms, composed of a heavy chain linked to a light chain by disulfide bonds. Autocleavage; produces the single-chain CTSL after cleavage of the propeptide. The cleavage can be intermolecular.

Its subcellular location is the lysosome. It is found in the apical cell membrane. The protein localises to the cytoplasmic vesicle. The protein resides in the secretory vesicle. It localises to the chromaffin granule. Its subcellular location is the secreted. It is found in the extracellular space. The protein localises to the nucleus. The catalysed reaction is Specificity close to that of papain. As compared to cathepsin B, cathepsin L exhibits higher activity toward protein substrates, but has little activity on Z-Arg-Arg-NHMec, and no peptidyl-dipeptidase activity.. With respect to regulation, inhibited by the propeptide produced by autocleavage. Long isoform of CD74/Ii chain stabilizes the conformation of mature CTSL by binding to its active site and serving as a chaperone to help maintain a pool of mature enzyme in endocytic compartments and extracellular space of APCs. IFNG enhances the conversion into the CTSL mature and active form. Inhibited by CST6. Inhibited by the glycopeptide antibiotic teicoplanin. Inhibited by amantadine. In terms of biological role, thiol protease important for the overall degradation of proteins in lysosomes. Plays a critical for normal cellular functions such as general protein turnover, antigen processing and bone remodeling. Involved in the solubilization of cross-linked TG/thyroglobulin and in the subsequent release of thyroid hormone thyroxine (T4) by limited proteolysis of TG/thyroglobulin in the thyroid follicle lumen. In neuroendocrine chromaffin cells secretory vesicles, catalyzes the prohormone proenkephalin processing to the active enkephalin peptide neurotransmitter. In thymus, regulates CD4(+) T cell positive selection by generating the major histocompatibility complex class II (MHCII) bound peptide ligands presented by cortical thymic epithelial cells. Also mediates invariant chain processing in cortical thymic epithelial cells. Major elastin-degrading enzyme at neutral pH. Accumulates as a mature and active enzyme in the extracellular space of antigen presenting cells (APCs) to regulate degradation of the extracellular matrix in the course of inflammation. Secreted form generates endostatin from COL18A1. Critical for cardiac morphology and function. Plays an important role in hair follicle morphogenesis and cycling, as well as epidermal differentiation. Required for maximal stimulation of steroidogenesis by TIMP1. Its function is as follows. (Microbial infection) In cells lacking TMPRSS2 expression, facilitates human coronaviruses SARS-CoV and SARS-CoV-2 infections via a slow acid-activated route with the proteolysis of coronavirus spike (S) glycoproteins in lysosome for entry into host cell. Proteolysis within lysosomes is sufficient to activate membrane fusion by coronaviruses SARS-CoV and EMC (HCoV-EMC) S as well as Zaire ebolavirus glycoproteins. Functions in the regulation of cell cycle progression through proteolytic processing of the CUX1 transcription factor. Translation initiation at downstream start sites allows the synthesis of isoforms that are devoid of a signal peptide and localize to the nucleus where they cleave the CUX1 transcription factor and modify its DNA binding properties. This Homo sapiens (Human) protein is Procathepsin L.